We begin with the raw amino-acid sequence, 97 residues long: Large ribosomal subunit protein uL23 (97 aa).

It belongs to the universal ribosomal protein uL23 family. As to quaternary structure, part of the 50S ribosomal subunit. Contacts protein L29, and trigger factor when it is bound to the ribosome.

Its function is as follows. One of the early assembly proteins it binds 23S rRNA. One of the proteins that surrounds the polypeptide exit tunnel on the outside of the ribosome. Forms the main docking site for trigger factor binding to the ribosome. This chain is Large ribosomal subunit protein uL23, found in Agrobacterium fabrum (strain C58 / ATCC 33970) (Agrobacterium tumefaciens (strain C58)).